Consider the following 485-residue polypeptide: Glutamyl-tRNA(Gln) amidotransferase subunit A (485 aa).

Active-site charge relay system residues include lysine 79 and serine 154. Catalysis depends on serine 178, which acts as the Acyl-ester intermediate.

This sequence belongs to the amidase family. GatA subfamily. As to quaternary structure, heterotrimer of A, B and C subunits.

It catalyses the reaction L-glutamyl-tRNA(Gln) + L-glutamine + ATP + H2O = L-glutaminyl-tRNA(Gln) + L-glutamate + ADP + phosphate + H(+). Allows the formation of correctly charged Gln-tRNA(Gln) through the transamidation of misacylated Glu-tRNA(Gln) in organisms which lack glutaminyl-tRNA synthetase. The reaction takes place in the presence of glutamine and ATP through an activated gamma-phospho-Glu-tRNA(Gln). This is Glutamyl-tRNA(Gln) amidotransferase subunit A from Clostridium botulinum (strain ATCC 19397 / Type A).